Here is a 357-residue protein sequence, read N- to C-terminus: Isopenicillin-N N-acyltransferase (357 aa).

2 residues coordinate 6-aminopenicillanate: Asp121 and Arg310.

The protein belongs to the peptidase C45 family. As to quaternary structure, the active form of the enzyme results from processing of the 40-kDa monomeric precursor to a heterodimer containing subunits of 11 and 29 kDa. The pre-AAT protein is synthesized as 40 kDa precursor which is then self-processed into an 11 kDa (protein A) and a 29 kDa (protein B). The B protein carries AAT activity.

It localises to the peroxisome matrix. The catalysed reaction is isopenicillin N + phenylacetyl-CoA + H2O = penicillin G + L-2-aminoadipate + CoA + H(+). The protein operates within antibiotic biosynthesis; penicillin G biosynthesis; penicillin G from L-alpha-aminoadipate and L-cysteine and L-valine: step 3/3. Its function is as follows. Isopenicillin-N N-acyltransferase; part of the gene cluster that mediates the biosynthesis of penicillin, the world's most important antibiotic. AatA catalyzes the exchange of the alpha-aminoadipyl side chain of isopenicillin N for phenylacetic acid to yield penicillin. This step occurs in the peroxisomal matrix and the penM and paaT transporters are involved in the isopenicillin N and phenylacetic acid import into the peroxisome, respectively. The penicillin biosynthesis occurs via 3 enzymatic steps, the first corresponding to the production of the tripeptide N-[(5S)-5-amino-5-carboxypentanoyl]-L-cysteinyl-D-valine (LLD-ACV or ACV) by the NRPS acvA. The tripeptide ACV is then cyclized to isopenicillin N (IPN) by the isopenicillin N synthase ipnA that forms the beta-lactam nucleus. Finally, the alpha-aminoadipyl side chain is exchanged for phenylacetic acid by the isopenicillin N acyltransferase aatA to yield penicillin in the peroxisomal matrix. The protein is Isopenicillin-N N-acyltransferase of Penicillium chrysogenum (Penicillium notatum).